The sequence spans 239 residues: MEIDREDGRTPNQLRPLACSRNILHRPHGSASWSQGDTKVLAAVYGPKAGTKKNENAEKACFEVIWKPKSGQIGKVEKEYEMILKRTIQSICVLTVNPNTTTSVIIQVVHDDGSLLPCAINAACAALVDAGIPMKHLAVAICCCLAENGYLVLDPNKLEEKKMTAFAYLVFPNTTLSVLPEGSSVAEGEPVEHGIITSITHGVMSVDDYFLCVENGRAATASLSAFFRKNFQQSSSKAG.

At methionine 1 the chain carries N-acetylmethionine.

This sequence belongs to the RNase PH family. In terms of assembly, probable component of the RNA exosome complex.

The protein localises to the nucleus. Its subcellular location is the nucleolus. Functionally, probable component of the exosome 3'-&gt;5' exoribonuclease complex, a complex that degrades inherently unstable mRNAs containing AU-rich elements (AREs) within their 3'-untranslated regions. This Arabidopsis thaliana (Mouse-ear cress) protein is Exosome complex exonuclease RRP46 homolog.